Consider the following 197-residue polypeptide: 3-isopropylmalate dehydratase small subunit (197 aa).

It belongs to the LeuD family. LeuD type 1 subfamily. In terms of assembly, heterodimer of LeuC and LeuD.

It carries out the reaction (2R,3S)-3-isopropylmalate = (2S)-2-isopropylmalate. It functions in the pathway amino-acid biosynthesis; L-leucine biosynthesis; L-leucine from 3-methyl-2-oxobutanoate: step 2/4. Its function is as follows. Catalyzes the isomerization between 2-isopropylmalate and 3-isopropylmalate, via the formation of 2-isopropylmaleate. The sequence is that of 3-isopropylmalate dehydratase small subunit from Geobacillus sp. (strain WCH70).